Here is a 364-residue protein sequence, read N- to C-terminus: MSQKDYYEILGVAKNADAKQIKKAYKRLAMKHHPDRVKNDKASAEKKFKEIQKAYAILSDVQKRQAYDQFGHVGGNANVGSAGGNPFGGGFGDIFGDIFGGGSQQSNNRGSDLRYDLEIDLKKAAQGSTVKIRIPKNETCDTCSGIGAKSGTNVKTCSICSGVGQVQTQQGFFTVQRPCGTCSGTGQKIEFPCGTCRGQGLVRKQKTLSVKIPAGVDTGNRIRLSGEGEAGTIGSSSGDLYVQVHVKKHAIFEREDNDLYCEVPIDFATAALGGSIEVPTLENKLKIKVPSGTQTGKLFRLRDKGISHLQRDGSGDLICQVKIETPVNLNKKQQDLLQKFSSSCGKKHHPESDSFFDKMKSFFG.

One can recognise a J domain in the interval 5-71 (DYYEILGVAK…QKRQAYDQFG (67 aa)). Residues 127–205 (GSTVKIRIPK…CRGQGLVRKQ (79 aa)) form a CR-type zinc finger. 8 residues coordinate Zn(2+): Cys140, Cys143, Cys157, Cys160, Cys179, Cys182, Cys193, and Cys196. 4 CXXCXGXG motif repeats span residues 140–147 (CDTCSGIG), 157–164 (CSICSGVG), 179–186 (CGTCSGTG), and 193–200 (CGTCRGQG).

This sequence belongs to the DnaJ family. As to quaternary structure, homodimer. The cofactor is Zn(2+).

The protein localises to the cytoplasm. Its function is as follows. Participates actively in the response to hyperosmotic and heat shock by preventing the aggregation of stress-denatured proteins and by disaggregating proteins, also in an autonomous, DnaK-independent fashion. Unfolded proteins bind initially to DnaJ; upon interaction with the DnaJ-bound protein, DnaK hydrolyzes its bound ATP, resulting in the formation of a stable complex. GrpE releases ADP from DnaK; ATP binding to DnaK triggers the release of the substrate protein, thus completing the reaction cycle. Several rounds of ATP-dependent interactions between DnaJ, DnaK and GrpE are required for fully efficient folding. Also involved, together with DnaK and GrpE, in the DNA replication of plasmids through activation of initiation proteins. The sequence is that of Chaperone protein DnaJ from Ruthia magnifica subsp. Calyptogena magnifica.